The chain runs to 624 residues: Anti-CBASS protein Acb1 (624 aa).

A 3',3'-cGAMP-binding site is contributed by Tyr-106. Tyr-106 contributes to the 3',3'-cUAMP binding site. Catalysis depends on residues His-503, Thr-505, His-581, and Thr-583. Trp-617 serves as a coordination point for 3',3'-cGAMP. Trp-617 provides a ligand contact to 3',3'-cUAMP.

The protein belongs to the anti-CBASS protein Acb1 family.

It carries out the reaction 3',3'-cUAMP + H2O = U[3'-5']pAp[3'] + H(+). The enzyme catalyses 3',3',3'-c-tri-AMP + H2O = A[3'-5']pA[3'-5']pAp[3'] + H(+). The catalysed reaction is 3',3',3'-cAAG + H2O = G[3'-5']pA[3'-5']pAp[3'] + H(+). It catalyses the reaction 3',3',3'-cAAG + H2O = A[3'-5']pG[3'-5']pAp[3'] + H(+). It carries out the reaction 3',3'-cGAMP + H2O = G[3'-5']pAp[3'] + H(+). Counteracts or regulates the endogenous CBASS antiviral defense system. Phosphodiesterase that enables metal-independent hydrolysis of the host cyclic di- and trinucleotide CBASS signals such as 3'3'-cGAMP, 3'3'cUA, and 3'3'3'-cAAA. In Sphingomonas paeninsulae, this protein is Anti-CBASS protein Acb1.